The chain runs to 93 residues: MKKTLILLAMVIALVILPFFIDHGGEFGGSDGEAESQIQVVAPHYEPWFQPLYEPASGEIESLLFTLQGSLGAAVIFYILGYSKGRQRRDDRA.

A run of 2 helical transmembrane segments spans residues 5–25 and 62–82; these read LILL…DHGG and SLLF…ILGY.

This sequence belongs to the CbiN family. As to quaternary structure, forms an energy-coupling factor (ECF) transporter complex composed of an ATP-binding protein (A component, CbiO), a transmembrane protein (T component, CbiQ) and 2 possible substrate-capture proteins (S components, CbiM and CbiN) of unknown stoichimetry.

It is found in the cell inner membrane. Its pathway is cofactor biosynthesis; adenosylcobalamin biosynthesis. Part of the energy-coupling factor (ECF) transporter complex CbiMNOQ involved in cobalt import. The sequence is that of Cobalt transport protein CbiN from Citrobacter koseri (strain ATCC BAA-895 / CDC 4225-83 / SGSC4696).